An 83-amino-acid polypeptide reads, in one-letter code: Erabutoxin b (83 aa).

Residues 1–21 (MKTLLLTLVVVTIVCLDLGYT) form the signal peptide. The loop I stretch occupies residues 24–38 (CFNHQSSQPQTTKTC). Cystine bridges form between C24–C45, C38–C62, C64–C75, and C76–C81. The stretch between loop I and loop II stretch occupies residues 39-44 (SPGESS). Residues 45 to 62 (CYHKQWSDFRGTIIERGC) are loop II. Positions 64–75 (CPTVKPGIKLSC) are loop III.

It belongs to the three-finger toxin family. Short-chain subfamily. Type I alpha-neurotoxin sub-subfamily. Expressed by the venom gland.

It localises to the secreted. Its function is as follows. Binds with high affinity to muscular nicotinic acetylcholine receptors (nAChRs) (tested on Torpedo marmorata, Kd=0.07 nM), and with low affinity to neuronal alpha-7/CHRNA7 nAChRs (tested on chimeric alpha-7/CHRNA7, Kd=22 uM) and inhibit acetylcholine from binding to the receptor, thereby impairing neuromuscular transmission. Produces peripheral paralysis by blocking neuromuscular transmission at the postsynaptic site. The chain is Erabutoxin b from Laticauda semifasciata (Black-banded sea krait).